Consider the following 350-residue polypeptide: MGLKTTISPDSSFDKIINTKTSPPLHINSPMLESLALSKLFKEENAKVWMKVDALQPSGSFKIRGVGLLCNQLLKEKKSKNEEAHFICSSGGNAGKSVAYAGRKLNVKTTIVLPNTIPEATIEKIKDEGANVIVHGTIWDEANTFALELAEKEGCTDCYIHPFDHPLLWEGHSTMIDEIYQDVQNGVCEKPDVILFSVGGGGMMIGILQGLDRYGWNDIPIVTVETVGSHSFWKSFQEKQLTKLDVSEVTSVIKTLSTRSVCSEAWEISKRFNIKPILVTDRDAVDACLKFVDDERILVEPSCGATLSVLYSKKLSTLLDINSKNILTIVCGGNGTSILQLNDLLQTLPK.

Position 62 is an N6-(pyridoxal phosphate)lysine (lysine 62).

It belongs to the serine/threonine dehydratase family. Pyridoxal 5'-phosphate serves as cofactor.

Its subcellular location is the cytoplasm. The catalysed reaction is L-serine = pyruvate + NH4(+). Its pathway is carbohydrate biosynthesis; gluconeogenesis. This Dictyostelium discoideum (Social amoeba) protein is L-serine dehydratase (sds).